A 445-amino-acid polypeptide reads, in one-letter code: Phosphoglucosamine mutase (445 aa).

The active-site Phosphoserine intermediate is serine 102. Positions 102, 241, 243, and 245 each coordinate Mg(2+). Serine 102 carries the phosphoserine modification.

It belongs to the phosphohexose mutase family. It depends on Mg(2+) as a cofactor. In terms of processing, activated by phosphorylation.

The enzyme catalyses alpha-D-glucosamine 1-phosphate = D-glucosamine 6-phosphate. Catalyzes the conversion of glucosamine-6-phosphate to glucosamine-1-phosphate. The protein is Phosphoglucosamine mutase of Edwardsiella ictaluri (strain 93-146).